Here is a 193-residue protein sequence, read N- to C-terminus: Ganglioside GM2 activator (193 aa).

An N-terminal signal peptide occupies residues 1–20 (MHRLPLLLLLGLLLAGSVAP). Intrachain disulfides connect Cys39–Cys183, Cys99–Cys106, Cys112–Cys138, and Cys125–Cys136. An N-linked (GlcNAc...) asparagine glycan is attached at Asn151.

As to expression, widely expressed. Most abundant in kidney and testis.

The protein resides in the lysosome. It catalyses the reaction cholesterol(in) = cholesterol(out). Its function is as follows. Binds gangliosides and stimulates ganglioside GM2 degradation. It stimulates only the breakdown of ganglioside GM2 and glycolipid GA2 by beta-hexosaminidase A. It extracts single GM2 molecules from membranes and presents them in soluble form to beta-hexosaminidase A for cleavage of N-acetyl-D-galactosamine and conversion to GM3. The large binding pocket can accommodate several single chain phospholipids and fatty acids, GM2A also exhibits some calcium-independent phospholipase activity. Has cholesterol transfer activity. This Mus musculus (Mouse) protein is Ganglioside GM2 activator.